Reading from the N-terminus, the 114-residue chain is Immunomodulatory protein FIP-Fve (114 aa).

The residue at position 1 (serine 1) is an N-acetylserine.

It belongs to the fungal immunomodulatory protein (FIP) family. In terms of assembly, homodimer.

Functionally, lectin with specificity for complex cell-surface carbohydrates. Possesses immunomodulatory activity, stimulates lymphocyte mitogenesis, suppresses systemic anaphylaxis reactions and edema, enhances transcription of IL-2, IFN-gamma and TNF-alpha and hemagglutinates red blood cells. This is Immunomodulatory protein FIP-Fve from Flammulina velutipes (Agaricus velutipes).